Here is a 741-residue protein sequence, read N- to C-terminus: Exostosin-1b (741 aa).

Topologically, residues 1-7 (MQAKKRY) are cytoplasmic. A helical; Signal-anchor for type II membrane protein membrane pass occupies residues 8–28 (LISLLTGAFLVLLIYLGGGGV). At 29–741 (PGPAAPGSRS…RKKYREIERL (713 aa)) the chain is on the lumenal side. N-linked (GlcNAc...) asparagine glycans are attached at residues N84 and N325. UDP-N-acetyl-alpha-D-glucosamine contacts are provided by R435, R544, D560, E561, D562, E648, D649, and R696. A Mn(2+)-binding site is contributed by D562. Residues C647 and C699 are joined by a disulfide bond. The active site involves D649.

The protein belongs to the glycosyltransferase 47 family. Mn(2+) is required as a cofactor.

The protein resides in the endoplasmic reticulum membrane. The catalysed reaction is 3-O-{[(1-&gt;4)-beta-D-GlcA-(1-&gt;4)-alpha-D-GlcNAc](n)-(1-&gt;4)-beta-D-GlcA-(1-&gt;3)-beta-D-Gal-(1-&gt;3)-beta-D-Gal-(1-&gt;4)-beta-D-Xyl}-L-seryl-[protein] + UDP-N-acetyl-alpha-D-glucosamine = 3-O-{alpha-D-GlcNAc-[(1-&gt;4)-beta-D-GlcA-(1-&gt;4)-alpha-D-GlcNAc](n)-(1-&gt;4)-beta-D-GlcA-(1-&gt;3)-beta-D-Gal-(1-&gt;3)-beta-D-Gal-(1-&gt;4)-beta-D-Xyl}-L-seryl-[protein] + UDP + H(+). It catalyses the reaction 3-O-{alpha-D-GlcNAc-[(1-&gt;4)-beta-D-GlcA-(1-&gt;4)-alpha-D-GlcNAc](n)-(1-&gt;4)-beta-D-GlcA-(1-&gt;3)-beta-D-Gal-(1-&gt;3)-beta-D-Gal-(1-&gt;4)-beta-D-Xyl}-L-seryl-[protein] + UDP-alpha-D-glucuronate = 3-O-{[(1-&gt;4)-beta-D-GlcA-(1-&gt;4)-alpha-D-GlcNAc](n+1)-(1-&gt;4)-beta-D-GlcA-(1-&gt;3)-beta-D-Gal-(1-&gt;3)-beta-D-Gal-(1-&gt;4)-beta-D-Xyl}-L-seryl-[protein] + UDP + H(+). Its pathway is protein modification; protein glycosylation. Its function is as follows. Glycosyltransferase required for the biosynthesis of heparan-sulfate. The protein is Exostosin-1b (ext1b) of Danio rerio (Zebrafish).